The sequence spans 187 residues: Proline-rich protein 29 (187 aa).

Residues 133-187 (HQPPWQGEPRIQHQPPASRQEEVRDVPPPPPPSATGTVGADVPPASDYYDAESLP) are disordered.

In Mus musculus (Mouse), this protein is Proline-rich protein 29 (Prr29).